A 256-amino-acid polypeptide reads, in one-letter code: MTKITRIIKEARDQARLTALDFAQGIFENFVELHGDRSFRDDGAVIGGIGTLNGQPVTVVGIQKGRNLQDNLRRNFGQPHPEGYRKTLRLMKQAEKFGRPVVTFINTAGAYPGVGAEERGQGEAIARNLMEMSNLKVPIIAIIIGEGGSGGALALAVADKVWMLENSMYAVLSPEGFASILWKDGSRAMEAAELMKITSHELLQMEVVDKVIPERGFNNHELLAAVKEEIAAELDSLSQLPLEQLLENRYQRFRKY.

The 236-residue stretch at 1–236 (MTKITRIIKE…KEEIAAELDS (236 aa)) folds into the CoA carboxyltransferase C-terminal domain.

This sequence belongs to the AccA family. Acetyl-CoA carboxylase is a heterohexamer composed of biotin carboxyl carrier protein (AccB), biotin carboxylase (AccC) and two subunits each of ACCase subunit alpha (AccA) and ACCase subunit beta (AccD).

It is found in the cytoplasm. It carries out the reaction N(6)-carboxybiotinyl-L-lysyl-[protein] + acetyl-CoA = N(6)-biotinyl-L-lysyl-[protein] + malonyl-CoA. It participates in lipid metabolism; malonyl-CoA biosynthesis; malonyl-CoA from acetyl-CoA: step 1/1. In terms of biological role, component of the acetyl coenzyme A carboxylase (ACC) complex. First, biotin carboxylase catalyzes the carboxylation of biotin on its carrier protein (BCCP) and then the CO(2) group is transferred by the carboxyltransferase to acetyl-CoA to form malonyl-CoA. This Streptococcus sanguinis (strain SK36) protein is Acetyl-coenzyme A carboxylase carboxyl transferase subunit alpha.